A 198-amino-acid chain; its full sequence is MASQEIEQLASTLARLPGLGPRSARRAVLWLVKKRDTALPALLEALEGVQDRLVECDTCGNVDTQNPCGICADPRRDRKSICVVEDVADLWALDRARLFTGRYHVLGGKLSALDGVRPEDLNIANLLGRVEEGGIDEVVLAMNATLEGQTTSHYIAERLEEFPVRITQLAHGLPVGGELDYLDEGTLAQALRARRPVQ.

The segment at cysteine 56 to cysteine 71 adopts a C4-type zinc-finger fold. Positions lysine 79–proline 174 constitute a Toprim domain.

This sequence belongs to the RecR family.

Its function is as follows. May play a role in DNA repair. It seems to be involved in an RecBC-independent recombinational process of DNA repair. It may act with RecF and RecO. The sequence is that of Recombination protein RecR from Erythrobacter litoralis (strain HTCC2594).